The following is a 217-amino-acid chain: GTPase IMAP family member GIMD1 (217 aa).

The region spanning 6-217 is the AIG1-type G domain; it reads KMIINLAVFG…ENHFQVLSLA (212 aa). GTP is bound by residues 15 to 23, serine 36, and 148 to 150; these read GRTQSGKSS and HAE.

It belongs to the TRAFAC class TrmE-Era-EngA-EngB-Septin-like GTPase superfamily. AIG1/Toc34/Toc159-like paraseptin GTPase family. IAN subfamily.

This Mus musculus (Mouse) protein is GTPase IMAP family member GIMD1 (Gimd1).